The primary structure comprises 905 residues: Respiratory burst oxidase homolog protein B (905 aa).

Disordered stretches follow at residues 1-46 (MADL…KTAR) and 69-134 (EVRG…VRKR). Over 1-355 (MADLEAGMVA…MYFLEENWKR (355 aa)) the chain is Cytoplasmic. Over residues 29–44 (IPNSGNLGSSNRSTKT) the composition is skewed to polar residues. Gly residues predominate over residues 75 to 84 (EGGSGHGTGF). Positions 91 to 108 (SPSSKSGKLTSKLRQVTN) are enriched in polar residues. 2 EF-hand-like regions span residues 172–180 (QVDGVLLRS) and 206–217 (RGIVKQVLTKDE). EF-hand domains are found at residues 229–264 (GFDNRLRTFFDMVDKNADGRLTAEEVKEIIALSASA) and 273–308 (RADEYTALIMEELDPTNLGYIEMEDLEALLLQSPSE). Residues Asp-242, Asn-244, Asp-246, Arg-248, and Glu-253 each contribute to the Ca(2+) site. A helical transmembrane segment spans residues 356 to 376 (SWVMTLWISICIALFIWKFIQ). Topologically, residues 377-440 (YRNRAVFGIM…FNDNINFHKV (64 aa)) are extracellular. The region spanning 395 to 551 (GAAETLKFNM…HLFVIVYTLL (157 aa)) is the Ferric oxidoreductase domain. Residues 441–461 (IAAGVAVGVALHAGAHLTCDF) form a helical membrane-spanning segment. The Cytoplasmic portion of the chain corresponds to 462–496 (PRLLHASDAQYELMKPFFGEKRPPNYWWFVKGTEG). A helical transmembrane segment spans residues 497-517 (WTGVVMVVLMAIAFTLAQPWF). At 518-539 (RRNKLKDSNPLKKMTGFNAFWF) the chain is on the extracellular side. A helical transmembrane segment spans residues 540 to 560 (THHLFVIVYTLLFVHGTCLYL). Over 561–568 (SRKWYKKT) the chain is Cytoplasmic. A helical membrane pass occupies residues 569-586 (TWMYLAVPVVLYVSERIL). An FAD-binding FR-type domain is found at 587–715 (RLFRSHDAVG…DGPYGAPAQD (129 aa)). Residues 587 to 717 (RLFRSHDAVG…PYGAPAQDYR (131 aa)) lie on the Extracellular side of the membrane. The helical transmembrane segment at 718 to 738 (EYDVLLLIGLGIGATPLISIV) threads the bilayer. Topologically, residues 739 to 905 (KDVLNHIQGE…TRFDFHKENF (167 aa)) are cytoplasmic.

Belongs to the RBOH (TC 5.B.1.3) family. As to quaternary structure, monomer and homodimer, stabilized by swapping the EF-hand motifs. Interacts with GTP-bound RAC1.

It localises to the membrane. Its function is as follows. Calcium-dependent NADPH oxidase that generates superoxide. This is Respiratory burst oxidase homolog protein B (RBOHB) from Oryza sativa subsp. japonica (Rice).